The chain runs to 60 residues: Metallothionein (60 aa).

The segment at 1 to 28 is beta; that stretch reads MDPCDCSKTGKCNCGGSCTCTNCSCTSC. Residues C4, C6, C12, C14, C18, C20, C23, C25, C28, C32, C33, C35, C36, C40, C43, C47, C49, C54, C58, and C59 each contribute to the a divalent metal cation site. The tract at residues 29–60 is alpha; sequence KKSCCACCPSGCTKCASGCVCKGKTCDTTCCQ.

It belongs to the metallothionein superfamily. Type 1 family.

Metallothioneins have a high content of cysteine residues that bind various heavy metals. In Oryzias latipes (Japanese rice fish), this protein is Metallothionein (mt).